A 271-amino-acid polypeptide reads, in one-letter code: Formamidopyrimidine-DNA glycosylase (271 aa).

Pro-2 functions as the Schiff-base intermediate with DNA in the catalytic mechanism. The Proton donor role is filled by Glu-3. Lys-57 acts as the Proton donor; for beta-elimination activity in catalysis. Positions 90, 109, and 150 each coordinate DNA. Residues 235–269 (LVYGNKDKPCPKCGGKIESLIIGQRNSFFCPKCQK) form an FPG-type zinc finger. Arg-259 serves as the catalytic Proton donor; for delta-elimination activity.

This sequence belongs to the FPG family. As to quaternary structure, monomer. Zn(2+) is required as a cofactor.

It catalyses the reaction Hydrolysis of DNA containing ring-opened 7-methylguanine residues, releasing 2,6-diamino-4-hydroxy-5-(N-methyl)formamidopyrimidine.. The enzyme catalyses 2'-deoxyribonucleotide-(2'-deoxyribose 5'-phosphate)-2'-deoxyribonucleotide-DNA = a 3'-end 2'-deoxyribonucleotide-(2,3-dehydro-2,3-deoxyribose 5'-phosphate)-DNA + a 5'-end 5'-phospho-2'-deoxyribonucleoside-DNA + H(+). Functionally, involved in base excision repair of DNA damaged by oxidation or by mutagenic agents. Acts as a DNA glycosylase that recognizes and removes damaged bases. Has a preference for oxidized purines, such as 7,8-dihydro-8-oxoguanine (8-oxoG). Has AP (apurinic/apyrimidinic) lyase activity and introduces nicks in the DNA strand. Cleaves the DNA backbone by beta-delta elimination to generate a single-strand break at the site of the removed base with both 3'- and 5'-phosphates. This Haemophilus influenzae (strain PittEE) protein is Formamidopyrimidine-DNA glycosylase.